Here is a 184-residue protein sequence, read N- to C-terminus: Mitochondrial translation release factor in rescue (184 aa).

The transit peptide at 1–98 (MSSRSTWALL…HVPSGIVVKC (98 aa)) directs the protein to the mitochondrion. Positions 60-124 (ESELEEQFVK…LQEKVDVFYN (65 aa)) are GGQ domain. A GGQ motif is present at residues 74–76 (GGQ). Gln76 is subject to N5-methylglutamine. Positions 130–178 (VHKEKLEAERRKRERKKRAKETLEKKKLLKELREASQNITEKKADADGI) form a coiled coil. Residues 132 to 184 (KEKLEAERRKRERKKRAKETLEKKKLLKELREASQNITEKKADADGIPRGFQE) are disordered. Positions 149 to 184 (KETLEKKKLLKELREASQNITEKKADADGIPRGFQE) are enriched in basic and acidic residues.

It belongs to the prokaryotic/mitochondrial release factor family. As to quaternary structure, interacts (via C-terminus) with MTRES1 (via S4 domain). Associates with mitoribosomal S39 large subunit, peptidyl tRNA and nascent chain. In terms of processing, methylation of glutamine in the GGQ triplet by HEMK1.

It localises to the mitochondrion. Part of a mitoribosome-associated quality control pathway that prevents aberrant translation by responding to interruptions during elongation. As heterodimer with MTRES1, ejects the unfinished nascent chain and peptidyl transfer RNA (tRNA), respectively, from stalled ribosomes. Recruitment of mitoribosome biogenesis factors to these quality control intermediates suggests additional roles for MTRES1 and MTRF during mitoribosome rescue. The sequence is that of Mitochondrial translation release factor in rescue from Mus musculus (Mouse).